The sequence spans 1038 residues: Elongation factor 3 (1038 aa).

HEAT repeat units lie at residues 93–131 (EAYL…SANK), 133–170 (STIR…VAPY), 174–211 (RCLP…VVGN), 213–249 (DIEP…TVEA), 255–287 (MEPL…LMDD), and 292–331 (QLFI…AGGS). Glutamate 406 contacts ADP. ABC transporter domains are found at residues 426-654 (IFIE…YYEL) and 680-995 (IRLT…EEVT). Residues asparagine 716, glutamate 924, asparagine 927, and histidine 953 each contribute to the ADP site. Positions 1012–1038 (RKEKKAKDKARKEAEARGEYYSDSDEE) are disordered. The segment covering 1021–1031 (ARKEAEARGEY) has biased composition (basic and acidic residues).

This sequence belongs to the ABC transporter superfamily. ABCF family. EF3 subfamily. As to quaternary structure, monomer.

It localises to the cytoplasm. The enzyme catalyses ATP + H2O = ADP + phosphate + H(+). It participates in protein biosynthesis; polypeptide chain elongation. Functionally, ribosome-dependent ATPase that functions in cytoplasmic translation elongation. Required for the ATP-dependent release of deacylated tRNA from the ribosomal E-site during protein biosynthesis. Stimulates the eEF1A-dependent binding of aminoacyl-tRNA to the ribosomal A-site, which has reduced affinity for tRNA as long as the E-site is occupied. Assists translation termination by stimulating the release of nascent protein from the ribosome by release factors. The polypeptide is Elongation factor 3 (Phytophthora infestans (strain T30-4) (Potato late blight agent)).